The following is a 218-amino-acid chain: MGRLLAFVVGAALVSSAWGGCVEVDSETEAVYGMTFKILCISCKRRSETTAETFTEWTFRQKGTEEFVKILRYENEVLQLEEDERFEGRVVWNGSRGTKDLQDLSIFITNVTYNHSGDYQCHVYRLLSFENYEHNTSVVKKIHLEVVDKANRDMASIVSEIMMYVLIVVLTIWLVAEMVYCYKKIAAATEAAAQENASEYLAITSESKENCTGVQVAE.

The first 18 residues, 1-18, serve as a signal peptide directing secretion; sequence MGRLLAFVVGAALVSSAW. Over 19-157 the chain is Extracellular; sequence GGCVEVDSET…DKANRDMASI (139 aa). Cystine bridges form between Cys-21–Cys-43 and Cys-40–Cys-121. The region spanning 22-150 is the Ig-like C2-type domain; the sequence is VEVDSETEAV…KIHLEVVDKA (129 aa). 4 N-linked (GlcNAc...) asparagine glycosylation sites follow: Asn-93, Asn-110, Asn-114, and Asn-135. The chain crosses the membrane as a helical span at residues 158–179; it reads VSEIMMYVLIVVLTIWLVAEMV. At 180 to 218 the chain is on the cytoplasmic side; sequence YCYKKIAAATEAAAQENASEYLAITSESKENCTGVQVAE.

Belongs to the sodium channel auxiliary subunit SCN1B (TC 8.A.17) family. In terms of assembly, a voltage-gated sodium (Nav) channel consists of an ion-conducting pore-forming alpha subunit functional on its own that is regulated by one or more beta subunits. Interacts with SCN1A; regulatory subunit of SCN1A/Nav1.1. Interacts with SCN3A; regulatory subunit of SCN3A/Nav1.3. Interacts with SCN4A; regulatory subunit of SCN4A/Nav1.4. Interacts with SCN5A; regulatory subunit of SCN5A/Nav1.5. Interacts with SCN8A; regulatory subunit of SCN8A/Nav1.6. Interacts with SCN9A; regulatory subunit of SCN9A/Nav1.7. Interacts with SCN10A; regulatory subunit of SCN10A/Nav1.8. Interacts with NFASC. Interacts with TMEM65.

The protein localises to the cell membrane. Its subcellular location is the perikaryon. The protein resides in the cell projection. It localises to the axon. Regulatory subunit of multiple voltage-gated sodium (Nav) channels directly mediating the depolarization of excitable membranes. Navs, also called VGSCs (voltage-gated sodium channels) or VDSCs (voltage-dependent sodium channels), operate by switching between closed and open conformations depending on the voltage difference across the membrane. In the open conformation they allow Na(+) ions to selectively pass through the pore, along their electrochemical gradient. The influx of Na+ ions provokes membrane depolarization, initiating the propagation of electrical signals throughout cells and tissues. The accessory beta subunits participate in localization and functional modulation of the Nav channels. Modulates the activity of SCN1A/Nav1.1, SCN2A/Nav1.2, SCN3A/Nav1.3, SCN4A/Nav1.4, SCN5A/Nav1.5, SCN8A/Nav1.6, SCN9A/Nav1.7 and SCN10A/Nav1.8. This chain is Sodium channel regulatory subunit beta-1, found in Oryctolagus cuniculus (Rabbit).